Consider the following 213-residue polypeptide: Kynurenine formamidase (213 aa).

Substrate is bound at residue Trp18. Residues His48, His52, and Asp54 each coordinate Zn(2+). Residue His58 is the Proton donor/acceptor of the active site. Residues His160 and Glu172 each contribute to the Zn(2+) site.

Belongs to the Cyclase 1 superfamily. KynB family. In terms of assembly, homodimer. Requires Zn(2+) as cofactor.

The enzyme catalyses N-formyl-L-kynurenine + H2O = L-kynurenine + formate + H(+). Its pathway is amino-acid degradation; L-tryptophan degradation via kynurenine pathway; L-kynurenine from L-tryptophan: step 2/2. Catalyzes the hydrolysis of N-formyl-L-kynurenine to L-kynurenine, the second step in the kynurenine pathway of tryptophan degradation. The chain is Kynurenine formamidase from Burkholderia mallei (strain NCTC 10247).